The chain runs to 1237 residues: MASVVGDDCNLDVMPPRKKKNKGSNKMQDKLNSNNNTGSKKSRKRKLNSNVNTVACKSQKRKLKKLEEDKEKEILFSKTAELLDKYKISEDVSSLLQSSKVIGRSATKLEKRRRAMQLSKAGVETEHSDESVEQNDNDDDSCMDEPTTPEHVEIETPTFVTDSEQQLVHADLMISAEESSSKLEVDDTVDMIPLTTCRDDDEDSMDGLIENEDVTVQGPRVPAFVVHVSRPAEVEETRKDLPIVMMEQEIMEAINRHPAVIISGQTGCGKTTQVPQFLYEAGFGSKQFSSRSGIIGITQPRRVAVLATAKRVAFELGVRLGKEVGFQVRYDKKIGENSSIKFMTDGILLREIQNDFLLRRYSVIILDEAHERSLNTDILIGMLTRVIKIRQEYYEEQQKSLQSGGTVTSECQITPLKLILMSATLRVEDFVSGKRLFPNIPPLIEVPTRQYPVTIHFSKKTEIVDYIGEAYKKVMSIHKKLPQGGILVFVTGQREVDYLCEKLRKSSKELVVQAAKRDAYVKKKCDDGSFGGVDMKEIAEAFDDDSNNQNSRFSSHGEDPSDIGDGNYDDDFEEEDMYESDEDRDWETVDDGFASSFVEEGKLDALRAAFNALADKNGSVSAEPAKSIAAENQEAEQVKNKFSPGKLRVLPLYAMLSPAAQLRVFEEVEKEERLVVVATNVAETSLTIPGIKYVVDTGRVKVKNYDSKTGMESYEVDWISQASASQRAGRAGRTGPGHCYRLYSSAVFSNIFEESSLPEIMKVPVDGVILLMKSMNIPKVENFPFPTPPEPSAIREAERCLKALEALDSNGGLTPLGKAMSHYPMSPRHSRMLLTVIQMLKETRNYSRANLILGYAVAAVAALSLPNPLIMEFEGEKKNESKDADKTVKQEDKQRKKDRKEKIKAARDRFSNPSSDALTVAYALHSFEVSENGMGFCEANGLHLKTMDEMSKLKDQLLRLVFNCCKPSETEDSFSWTHGTIQDVEKSWRITTSTSSKTPLLQNEEELLGEAICAGWADRVARKTRATEYQACAVQEPVFLHRWSSLINSAPELLVYSELLLTNRPYMHGATRVRPEWLVKHAKSLCVFSAPLKDPKPYYSSEEDRVLCWVVPSFGPHNWELPAHSVAITEDRDRAAAFGCALLQGEVLTCLKSFRALLAGKPETLLEREAWGLERVGSLVMVLTEKKIDTLESLRKNWEQNPNVLYSEIEVWFQKKFRHRVKDLWQTMLKEAHVRRS.

Disordered stretches follow at residues 1-51 (MASV…NSNV) and 115-148 (AMQL…EPTT). Polar residues predominate over residues 24–38 (SNKMQDKLNSNNNTG). Over residues 131 to 143 (SVEQNDNDDDSCM) the composition is skewed to acidic residues. One can recognise a Helicase ATP-binding domain in the interval 251–443 (MEAINRHPAV…KRLFPNIPPL (193 aa)). 264-271 (GQTGCGKT) is a binding site for ATP. The DEAH box signature appears at 367–370 (DEAH). The tract at residues 543-585 (DDDSNNQNSRFSSHGEDPSDIGDGNYDDDFEEEDMYESDEDRD) is disordered. Positions 567-585 (NYDDDFEEEDMYESDEDRD) are enriched in acidic residues. Residues 605 to 776 (ALRAAFNALA…GVILLMKSMN (172 aa)) enclose the Helicase C-terminal domain. A disordered region spans residues 876-910 (EKKNESKDADKTVKQEDKQRKKDRKEKIKAARDRF).

This sequence belongs to the DEAD box helicase family. DEAH subfamily.

The catalysed reaction is ATP + H2O = ADP + phosphate + H(+). This Arabidopsis thaliana (Mouse-ear cress) protein is ATP-dependent RNA helicase DEAH13.